A 221-amino-acid polypeptide reads, in one-letter code: Ribosomal RNA small subunit methyltransferase G (221 aa).

S-adenosyl-L-methionine contacts are provided by residues G89, L94, 140-141, and R154; that span reads VE.

Belongs to the methyltransferase superfamily. RNA methyltransferase RsmG family.

The protein resides in the cytoplasm. The catalysed reaction is guanosine(527) in 16S rRNA + S-adenosyl-L-methionine = N(7)-methylguanosine(527) in 16S rRNA + S-adenosyl-L-homocysteine. Specifically methylates the N7 position of guanine in position 527 of 16S rRNA. The polypeptide is Ribosomal RNA small subunit methyltransferase G (Methylibium petroleiphilum (strain ATCC BAA-1232 / LMG 22953 / PM1)).